A 266-amino-acid polypeptide reads, in one-letter code: MRLVKPKKALGQHFLKDLQIAQRIADTLDTFKSLPVLEIGPGMGVLTQFLLEAGHDLTVVELDMESVDYLNQNFPDLKGRIIAEDFLKLDLSKLFPGQFCVIGNYPYNISSQIFFKVLDYKDQIPCCSGMLQKEVAERLAAGPGSKTYGILSVLLQAWYDVEYLFTVSEKVFDPPPKVKSAVLKMTRNDRKELGCDEKLFKTVVKTSFNQRRKTLRNSMKPLLGKDCPDYALPIFDKRPEQLSMEQFVELTLISQKHLEKQAGDVL.

S-adenosyl-L-methionine is bound by residues His13, Leu15, Gly40, Glu61, Asp85, and Asn104.

It belongs to the class I-like SAM-binding methyltransferase superfamily. rRNA adenine N(6)-methyltransferase family. RsmA subfamily.

It localises to the cytoplasm. The enzyme catalyses adenosine(1518)/adenosine(1519) in 16S rRNA + 4 S-adenosyl-L-methionine = N(6)-dimethyladenosine(1518)/N(6)-dimethyladenosine(1519) in 16S rRNA + 4 S-adenosyl-L-homocysteine + 4 H(+). Specifically dimethylates two adjacent adenosines (A1518 and A1519) in the loop of a conserved hairpin near the 3'-end of 16S rRNA in the 30S particle. May play a critical role in biogenesis of 30S subunits. The protein is Ribosomal RNA small subunit methyltransferase A of Parabacteroides distasonis (strain ATCC 8503 / DSM 20701 / CIP 104284 / JCM 5825 / NCTC 11152).